The sequence spans 366 residues: 3-dehydroquinate synthase (366 aa).

Residues Asp75–Lys80, Gly109–Asp113, Thr133–Thr134, Lys146, Lys155, and Thr173–Thr176 contribute to the NAD(+) site. Glu188, His251, and His268 together coordinate Zn(2+).

Belongs to the sugar phosphate cyclases superfamily. Dehydroquinate synthase family. It depends on Co(2+) as a cofactor. The cofactor is Zn(2+). NAD(+) is required as a cofactor.

Its subcellular location is the cytoplasm. It catalyses the reaction 7-phospho-2-dehydro-3-deoxy-D-arabino-heptonate = 3-dehydroquinate + phosphate. Its pathway is metabolic intermediate biosynthesis; chorismate biosynthesis; chorismate from D-erythrose 4-phosphate and phosphoenolpyruvate: step 2/7. In terms of biological role, catalyzes the conversion of 3-deoxy-D-arabino-heptulosonate 7-phosphate (DAHP) to dehydroquinate (DHQ). In Nitrosospira multiformis (strain ATCC 25196 / NCIMB 11849 / C 71), this protein is 3-dehydroquinate synthase.